Reading from the N-terminus, the 510-residue chain is ATP synthase subunit alpha (510 aa).

An ATP-binding site is contributed by 170 to 177; the sequence is GDRQTGKT.

The protein belongs to the ATPase alpha/beta chains family. F-type ATPases have 2 components, CF(1) - the catalytic core - and CF(0) - the membrane proton channel. CF(1) has five subunits: alpha(3), beta(3), gamma(1), delta(1), epsilon(1). CF(0) has three main subunits: a(1), b(2) and c(9-12). The alpha and beta chains form an alternating ring which encloses part of the gamma chain. CF(1) is attached to CF(0) by a central stalk formed by the gamma and epsilon chains, while a peripheral stalk is formed by the delta and b chains.

It localises to the cell inner membrane. The enzyme catalyses ATP + H2O + 4 H(+)(in) = ADP + phosphate + 5 H(+)(out). Produces ATP from ADP in the presence of a proton gradient across the membrane. The alpha chain is a regulatory subunit. The sequence is that of ATP synthase subunit alpha from Dictyoglomus thermophilum (strain ATCC 35947 / DSM 3960 / H-6-12).